The sequence spans 439 residues: Putrescine transporter PotE (439 aa).

12 helical membrane passes run 10–30, 40–60, 91–111, 114–134, 152–172, 186–206, 225–245, 276–296, 321–341, 354–374, 387–407, and 410–430; these read GVVQ…IIML, ISII…WAFA, TYGV…VGYG, LLGA…VLWI, ITVW…WFWF, APFF…FLGL, IAVL…TNVI, VIMA…QFTI, APVQ…LMTI, NLAV…LVII, VANF…YSSG, and AMLY…LVSP.

The protein belongs to the amino acid-polyamine-organocation (APC) superfamily. Basic amino acid/polyamine antiporter (APA) (TC 2.A.3.2) family.

The protein localises to the cell inner membrane. The catalysed reaction is putrescine(in) + H(+)(in) = putrescine(out) + H(+)(out). It catalyses the reaction putrescine(in) + L-ornithine(out) = putrescine(out) + L-ornithine(in). Functionally, catalyzes both the uptake and excretion of putrescine. The uptake of putrescine is dependent on the membrane potential and the excretion involves putrescine-ornithine antiporter activity. This is Putrescine transporter PotE from Escherichia coli O6:H1 (strain CFT073 / ATCC 700928 / UPEC).